The following is a 136-amino-acid chain: Large ribosomal subunit protein eL27 (136 aa).

Positions 5 to 40 (MKPGKVVMVLAGRYAGRKAVIVKNIDDGTADRPYSH) constitute a KOW domain.

This sequence belongs to the eukaryotic ribosomal protein eL27 family. Component of the large ribosomal subunit.

It localises to the cytoplasm. It is found in the cytosol. The protein localises to the rough endoplasmic reticulum. Its function is as follows. Component of the large ribosomal subunit. In Danio rerio (Zebrafish), this protein is Large ribosomal subunit protein eL27 (rpl27).